The sequence spans 342 residues: UDP-N-acetylglucosamine--N-acetylmuramyl-(pentapeptide) pyrophosphoryl-undecaprenol N-acetylglucosamine transferase (342 aa).

UDP-N-acetyl-alpha-D-glucosamine contacts are provided by residues 10-12 (TGG), Asn124, Ser177, and Gln275.

Belongs to the glycosyltransferase 28 family. MurG subfamily.

The protein resides in the cell inner membrane. The catalysed reaction is di-trans,octa-cis-undecaprenyl diphospho-N-acetyl-alpha-D-muramoyl-L-alanyl-D-glutamyl-meso-2,6-diaminopimeloyl-D-alanyl-D-alanine + UDP-N-acetyl-alpha-D-glucosamine = di-trans,octa-cis-undecaprenyl diphospho-[N-acetyl-alpha-D-glucosaminyl-(1-&gt;4)]-N-acetyl-alpha-D-muramoyl-L-alanyl-D-glutamyl-meso-2,6-diaminopimeloyl-D-alanyl-D-alanine + UDP + H(+). It functions in the pathway cell wall biogenesis; peptidoglycan biosynthesis. Cell wall formation. Catalyzes the transfer of a GlcNAc subunit on undecaprenyl-pyrophosphoryl-MurNAc-pentapeptide (lipid intermediate I) to form undecaprenyl-pyrophosphoryl-MurNAc-(pentapeptide)GlcNAc (lipid intermediate II). The polypeptide is UDP-N-acetylglucosamine--N-acetylmuramyl-(pentapeptide) pyrophosphoryl-undecaprenol N-acetylglucosamine transferase (Campylobacter jejuni subsp. doylei (strain ATCC BAA-1458 / RM4099 / 269.97)).